An 85-amino-acid polypeptide reads, in one-letter code: CDC42 small effector protein homolog (85 aa).

Residues Cys-14 and Cys-15 are each lipidated (S-palmitoyl cysteine). Residues 37-50 (IGNPTNFVHTGHIG) enclose the CRIB domain. Ser-78 and Ser-81 each carry phosphoserine.

Belongs to the CDC42SE/SPEC family.

It localises to the cytoplasm. It is found in the cytoskeleton. Its subcellular location is the cell membrane. Functionally, probably involved in the organization of the actin cytoskeleton by acting downstream of CDC42, inducing actin filament assembly. The chain is CDC42 small effector protein homolog (Spec2) from Drosophila melanogaster (Fruit fly).